Reading from the N-terminus, the 173-residue chain is Bifunctional protein PyrR (173 aa).

The PRPP-binding signature appears at 93–105 (VILVDDVLYTGRT).

The protein belongs to the purine/pyrimidine phosphoribosyltransferase family. PyrR subfamily. Homodimer and homohexamer; in equilibrium.

It catalyses the reaction UMP + diphosphate = 5-phospho-alpha-D-ribose 1-diphosphate + uracil. In terms of biological role, regulates transcriptional attenuation of the pyrimidine nucleotide (pyr) operon by binding in a uridine-dependent manner to specific sites on pyr mRNA. This disrupts an antiterminator hairpin in the RNA and favors formation of a downstream transcription terminator, leading to a reduced expression of downstream genes. Also displays a weak uracil phosphoribosyltransferase activity which is not physiologically significant. This chain is Bifunctional protein PyrR, found in Streptococcus uberis (strain ATCC BAA-854 / 0140J).